The chain runs to 179 residues: Cytochrome c-type biogenesis protein CcmE (179 aa).

Residues 1-8 (MNPRRKSR) are Cytoplasmic-facing. Residues 9-29 (LTIILFVLLGVTIASSLVLYA) traverse the membrane as a helical; Signal-anchor for type II membrane protein segment. Residues 30 to 179 (LRQNIDLFYT…AVNSVEEGKK (150 aa)) are Periplasmic-facing. Positions 131 and 135 each coordinate heme. Composition is skewed to basic and acidic residues over residues 138–148 (PDLSEKMEQVH) and 161–179 (ESDR…EGKK). The interval 138 to 179 (PDLSEKMEQVHKPMGISNQDMQGESDRDRLDKAVNSVEEGKK) is disordered.

It belongs to the CcmE/CycJ family.

It is found in the cell inner membrane. In terms of biological role, heme chaperone required for the biogenesis of c-type cytochromes. Transiently binds heme delivered by CcmC and transfers the heme to apo-cytochromes in a process facilitated by CcmF and CcmH. This Mannheimia succiniciproducens (strain KCTC 0769BP / MBEL55E) protein is Cytochrome c-type biogenesis protein CcmE.